Here is a 320-residue protein sequence, read N- to C-terminus: Lipoyl synthase (320 aa).

[4Fe-4S] cluster contacts are provided by Cys-67, Cys-72, Cys-78, Cys-93, Cys-97, Cys-100, and Ser-307. The Radical SAM core domain maps to 79–296 (FNHGTATFMI…REKAAEMGFE (218 aa)).

Belongs to the radical SAM superfamily. Lipoyl synthase family. Requires [4Fe-4S] cluster as cofactor.

It localises to the cytoplasm. It carries out the reaction [[Fe-S] cluster scaffold protein carrying a second [4Fe-4S](2+) cluster] + N(6)-octanoyl-L-lysyl-[protein] + 2 oxidized [2Fe-2S]-[ferredoxin] + 2 S-adenosyl-L-methionine + 4 H(+) = [[Fe-S] cluster scaffold protein] + N(6)-[(R)-dihydrolipoyl]-L-lysyl-[protein] + 4 Fe(3+) + 2 hydrogen sulfide + 2 5'-deoxyadenosine + 2 L-methionine + 2 reduced [2Fe-2S]-[ferredoxin]. The protein operates within protein modification; protein lipoylation via endogenous pathway; protein N(6)-(lipoyl)lysine from octanoyl-[acyl-carrier-protein]: step 2/2. Catalyzes the radical-mediated insertion of two sulfur atoms into the C-6 and C-8 positions of the octanoyl moiety bound to the lipoyl domains of lipoate-dependent enzymes, thereby converting the octanoylated domains into lipoylated derivatives. This is Lipoyl synthase from Actinobacillus succinogenes (strain ATCC 55618 / DSM 22257 / CCUG 43843 / 130Z).